We begin with the raw amino-acid sequence, 228 residues long: Cytidylate kinase (228 aa).

Gly-7 to Thr-15 serves as a coordination point for ATP.

It belongs to the cytidylate kinase family. Type 1 subfamily.

It is found in the cytoplasm. It catalyses the reaction CMP + ATP = CDP + ADP. The catalysed reaction is dCMP + ATP = dCDP + ADP. The polypeptide is Cytidylate kinase (Protochlamydia amoebophila (strain UWE25)).